A 288-amino-acid polypeptide reads, in one-letter code: Nucleotide-binding protein Tola_2941 (288 aa).

Position 8 to 15 (8 to 15 (GRSGSGKT)) interacts with ATP. GTP is bound at residue 56 to 59 (DVRN).

The protein belongs to the RapZ-like family.

Functionally, displays ATPase and GTPase activities. This chain is Nucleotide-binding protein Tola_2941, found in Tolumonas auensis (strain DSM 9187 / NBRC 110442 / TA 4).